The primary structure comprises 599 residues: DNA primase (599 aa).

The CHC2-type zinc finger occupies 38 to 62 (CPFHQEKTPSFTVSDSKRFFYCFGC). The Toprim domain occupies 250–332 (NYSILVEGYF…EKKISFIRLP (83 aa)). Mg(2+)-binding residues include E256, D300, and D302.

This sequence belongs to the DnaG primase family. As to quaternary structure, monomer. Interacts with DnaB. Zn(2+) serves as cofactor. Mg(2+) is required as a cofactor.

The catalysed reaction is ssDNA + n NTP = ssDNA/pppN(pN)n-1 hybrid + (n-1) diphosphate.. Functionally, RNA polymerase that catalyzes the synthesis of short RNA molecules used as primers for DNA polymerase during DNA replication. The protein is DNA primase of Rickettsia bellii (strain RML369-C).